Reading from the N-terminus, the 292-residue chain is tRNA pseudouridine synthase B (292 aa).

Asp38 acts as the Nucleophile in catalysis.

The protein belongs to the pseudouridine synthase TruB family. Type 1 subfamily.

It catalyses the reaction uridine(55) in tRNA = pseudouridine(55) in tRNA. Its function is as follows. Responsible for synthesis of pseudouridine from uracil-55 in the psi GC loop of transfer RNAs. This Streptococcus pneumoniae serotype 2 (strain D39 / NCTC 7466) protein is tRNA pseudouridine synthase B.